Consider the following 126-residue polypeptide: Small ribosomal subunit protein eS6 (126 aa).

This sequence belongs to the eukaryotic ribosomal protein eS6 family.

This Nanoarchaeum equitans (strain Kin4-M) protein is Small ribosomal subunit protein eS6.